A 523-amino-acid chain; its full sequence is Signal peptide peptidase-like 2A (523 aa).

The N-terminal stretch at 1-25 is a signal peptide; sequence MGLLHSLHAPAAALLWSCLLGLAAA. At 26 to 175 the chain is on the lumenal side; that stretch reads QEAILHASTN…PSWPNFDYTL (150 aa). N-linked (GlcNAc...) asparagine glycans are attached at residues asparagine 51, asparagine 61, asparagine 69, asparagine 119, asparagine 129, and asparagine 135. In terms of domain architecture, PA spans 70-155; it reads LTGTALCHLS…KDFKDMKETL (86 aa). A helical transmembrane segment spans residues 176-196; it reads VVIFVIAVFTVALGGYWSGLI. Residues 197 to 224 lie on the Cytoplasmic side of the membrane; that stretch reads ELENMKSVEDAEDRETRKKKDDYLTFSP. A helical transmembrane segment spans residues 225-245; the sequence is LTVVVFVVICCIMIVLLYFFY. Topologically, residues 246-247 are lumenal; that stretch reads RW. The chain crosses the membrane as a helical span at residues 248-268; the sequence is LVYVMIAIFCIASSMSLYNCL. Topologically, residues 269–288 are cytoplasmic; the sequence is SALIHRMPCGQCTILCCGKN. A helical membrane pass occupies residues 289 to 309; sequence IKVSLIFLSGLCISVAVVWAV. Residues 310–315 are Lumenal-facing; that stretch reads FRNEDR. The chain crosses the membrane as a helical span at residues 316–336; the sequence is WAWILQDILGIAFCLNLIKTM. Residues 337 to 344 lie on the Cytoplasmic side of the membrane; that stretch reads KLPNFMSC. Residues 345–365 form a helical membrane-spanning segment; the sequence is VILLGLLLIYDVFFVFITPFI. Aspartate 355 is an active-site residue. Topologically, residues 366 to 403 are lumenal; sequence TKNGESIMVELAAGPFENAEKLPVVIRVPKLMGYSVMS. The helical transmembrane segment at 404–424 threads the bilayer; it reads VCSVPVSVLGFGDIIVPGLLI. Aspartate 416 is an active-site residue. The Cytoplasmic portion of the chain corresponds to 425–440; it reads AYCRRFDVQTGSSIYY. The chain crosses the membrane as a helical span at residues 441 to 461; sequence ISSTIAYAVGMIITFVVLMVM. At 462-463 the chain is on the lumenal side; it reads KT. The chain crosses the membrane as a helical span at residues 464–484; sequence GQPALLYLVPCTLITVSVVAW. The short motif at 466 to 468 is the PAL element; the sequence is PAL. Residues 485–523 are Cytoplasmic-facing; sequence SRKEMKKFWKGSSYQVMDHLDYSTNEENPVTTDEQIVQQ. The YXXo lysosomal targeting motif signature appears at 498–501; the sequence is YQVM.

It belongs to the peptidase A22B family. As to quaternary structure, interacts with ITM2B. Glycosylated.

It is found in the late endosome membrane. Its subcellular location is the lysosome membrane. The protein localises to the membrane. Its function is as follows. Intramembrane-cleaving aspartic protease (I-CLiP) that cleaves type II membrane signal peptides in the hydrophobic plane of the membrane. Functions in FASLG, ITM2B and TNF processing. Catalyzes the intramembrane cleavage of the anchored fragment of shed TNF-alpha (TNF), which promotes the release of the intracellular domain (ICD) for signaling to the nucleus. Also responsible for the intramembrane cleavage of Fas antigen ligand FASLG, which promotes the release of the intracellular FasL domain (FasL ICD). Essential for degradation of the invariant chain CD74 that plays a central role in the function of antigen-presenting cells in the immune system. Plays a role in the regulation of innate and adaptive immunity. This is Signal peptide peptidase-like 2A from Mus musculus (Mouse).